Here is a 426-residue protein sequence, read N- to C-terminus: Phosphoribosylamine--glycine ligase (426 aa).

The region spanning 109-312 (KEVMEAAGVA…LAGVLNAVAT (204 aa)) is the ATP-grasp domain. 138 to 193 (LDYFGPMYVVKDDGLAAGKGVVVTADRAEARQHIHLVHAAGNPVLLESFLDGPEVS) is a binding site for ATP. The Mg(2+) site is built by E282 and N284.

The protein belongs to the GARS family. Mg(2+) serves as cofactor. It depends on Mn(2+) as a cofactor.

It catalyses the reaction 5-phospho-beta-D-ribosylamine + glycine + ATP = N(1)-(5-phospho-beta-D-ribosyl)glycinamide + ADP + phosphate + H(+). Its pathway is purine metabolism; IMP biosynthesis via de novo pathway; N(1)-(5-phospho-D-ribosyl)glycinamide from 5-phospho-alpha-D-ribose 1-diphosphate: step 2/2. This is Phosphoribosylamine--glycine ligase from Corynebacterium ammoniagenes (Brevibacterium ammoniagenes).